The chain runs to 232 residues: uncharacterized protein (232 aa).

The tract at residues 1-71 (MSNPTIEGDE…KENERIKNDD (71 aa)) is disordered. Acidic residues predominate over residues 25 to 38 (DDLDDLDDILDDLD). Over residues 44 to 71 (KNEEKKNIDEHKQTGNTSKENERIKNDD) the composition is skewed to basic and acidic residues.

This is an uncharacterized protein from Schizosaccharomyces pombe (strain 972 / ATCC 24843) (Fission yeast).